A 278-amino-acid polypeptide reads, in one-letter code: MGPDPSLAYRPECHEKDKTEFRNFENGDLFDRVFNTYKLMHTHQTLDFVKQKHQVWSNCSHFSLSMMDSIDSLDELVDESDPDVDFPNSFHAFQTAEGIRREHPDKDWFQLVGLIHDVGKVMALYSEPQWAVVGDTYPVGCKFQNSIVFRNSTFEGNPDGKNPAPNTEFGIYEPQCGLDKVLMSWGHDEYLYRVMKFNKCTIPEEGLYMIRFHSFYPWHSNGDYMHLCNEKDQQMLPWVKEFNKFDLYTKSTELPDVERLKPYYQSLIDKYCPGVLQW.

Substrate is bound by residues Arg22 and 78-80; that span reads DES. His91, His116, and Asp117 together coordinate Fe cation. Substrate-binding positions include Lys120 and 134–135; that span reads GD. The Fe cation site is built by His187, His213, and Asp246. Position 213 to 214 (213 to 214) interacts with substrate; sequence HS.

It belongs to the myo-inositol oxygenase family. The cofactor is Fe cation.

The protein resides in the cytoplasm. The catalysed reaction is myo-inositol + O2 = D-glucuronate + H2O + H(+). Its pathway is polyol metabolism; myo-inositol degradation into D-glucuronate; D-glucuronate from myo-inositol: step 1/1. This Danio rerio (Zebrafish) protein is Inositol oxygenase (miox).